A 232-amino-acid polypeptide reads, in one-letter code: Lipoprotein-releasing system ATP-binding protein LolD 1 (232 aa).

An ABC transporter domain is found at 11-231; sequence VYLHDVKRQY…SIQDGLVVEL (221 aa). 47 to 54 lines the ATP pocket; sequence APSGAGKS.

It belongs to the ABC transporter superfamily. Lipoprotein translocase (TC 3.A.1.125) family. As to quaternary structure, the complex is composed of two ATP-binding proteins (LolD) and two transmembrane proteins (LolC and LolE).

The protein localises to the cell inner membrane. Its function is as follows. Part of the ABC transporter complex LolCDE involved in the translocation of mature outer membrane-directed lipoproteins, from the inner membrane to the periplasmic chaperone, LolA. Responsible for the formation of the LolA-lipoprotein complex in an ATP-dependent manner. This is Lipoprotein-releasing system ATP-binding protein LolD 1 from Rhodopseudomonas palustris (strain BisB18).